Reading from the N-terminus, the 99-residue chain is Aspartyl/glutamyl-tRNA(Asn/Gln) amidotransferase subunit C (99 aa).

The protein belongs to the GatC family. Heterotrimer of A, B and C subunits.

The enzyme catalyses L-glutamyl-tRNA(Gln) + L-glutamine + ATP + H2O = L-glutaminyl-tRNA(Gln) + L-glutamate + ADP + phosphate + H(+). It carries out the reaction L-aspartyl-tRNA(Asn) + L-glutamine + ATP + H2O = L-asparaginyl-tRNA(Asn) + L-glutamate + ADP + phosphate + 2 H(+). Allows the formation of correctly charged Asn-tRNA(Asn) or Gln-tRNA(Gln) through the transamidation of misacylated Asp-tRNA(Asn) or Glu-tRNA(Gln) in organisms which lack either or both of asparaginyl-tRNA or glutaminyl-tRNA synthetases. The reaction takes place in the presence of glutamine and ATP through an activated phospho-Asp-tRNA(Asn) or phospho-Glu-tRNA(Gln). This is Aspartyl/glutamyl-tRNA(Asn/Gln) amidotransferase subunit C from Thermobifida fusca (strain YX).